A 436-amino-acid polypeptide reads, in one-letter code: MTLKIDIKGRGKYKPASDYSIDDVKNVLMEKIFEESSRIINSDDDLEIIEKVDFRTDKINVLSLFSGCGGLDLGFELAGLAAVIGEQAAMEAFKDKDRFNELRNKSIFHTIYTNDLFKEANQTYKTNFPGHVIQHEKDIRQVKYFPKCNLILGGFPCPGFSEAGPRLIDDDRNFLYLHFIRSLIQAQPEIFVAENVKGMMTLGKGEVLNQIIEDFASAGYRVQFKLLNARDYGVPQLRERVIIEGVRKDISFNYKYPSPTHGEETGLKPFKTLRDSIGDLVTDPGPYFTGSYSSIYMSRNRKKSWDEQSFTIQASGRQAPLHPGGLSMKKIGKDKWVFPDGEENHRRLSVKEIARVQTFPDWFQFSQGTNSQTSINNRLDKQYKQIGNAVPVLLAKAVASPIANWAINYLESSPNNKIKNRERKLSIRTFLRIKTS.

Residues 59-409 enclose the SAM-dependent MTase C5-type domain; sequence INVLSLFSGC…SPIANWAINY (351 aa). The active site involves Cys-157.

It belongs to the class I-like SAM-binding methyltransferase superfamily. C5-methyltransferase family. Monomer.

The enzyme catalyses a 2'-deoxycytidine in DNA + S-adenosyl-L-methionine = a 5-methyl-2'-deoxycytidine in DNA + S-adenosyl-L-homocysteine + H(+). In terms of biological role, a methylase, recognizes the double-stranded sequence 5'-GGCC-3', methylates C-3 on both strands, and protects the DNA from cleavage by the BsuRI endonuclease. This Bacillus subtilis protein is Type II methyltransferase M.BsuRI (hsdRM).